Consider the following 963-residue polypeptide: MGKPTLLEPGHLYNVPAEHKNDIPIHYIITWIKQRLPEFGGSIPTSLADRVLIIKSRTGSGKSTALPVHVFRILRNENTHSFQKYLGRSVICTQPRVLTAVTLAKDIGASTHYPDMILGQTVGYQTKPLTEKPNRGLIYATAGVLLAQLHTMTDDEIASRYAFMIIDEAHERALGIDLMLMYIKSMLERMLQRGSIGALRIPFVILTSATIDTYKYSTYFGIGKENIILVEGRQFGVETHWPLYNTNNYIKTACETALTIHKENIHDRPTEADILIFMPGMGEIRFLSMLLSHANMDLAKEKLPLMLILPIDSEAIAQENEAYLGLKAEIKDLWVKNPLTAKVEKPLRRVIVSTVVAETGLTIETLKYVIDPGWNRSVETYYPEWAGGLITRPAAQSRIEQRKGRVGRVFPGHFYPLYTKHVFEQIPAQQYPEIITEGPGAIFLNIVVETIKKNKEGVFKVQEIDMLDPPPTDALASALERAIVGGLLTRGEKGLQLTQLGDIASRFSFLSIEEARMCFSGYFWQAAISDIATILAVVSVVDKKLTNLLDSKQRNGAMLAEAVLAGIPPFLQNMDNAYSNIHLLLADDLLEGLFIFEGFQHAIIYFINNKVNNLAKHLREWCEKKMLKYSAMVQILARREDILNELAVVGLNPFHQWQNRLASANAETFLKRVCTLKQCFYEAYRLNCFCYDEQRLLYTGRNGIHFSYQDTVIKNPSCIVTPKMMLSPVSKQYMEWRLEPSFVSVLDGFVNVDINFLLPRQEIPNILGGGVEDEEEEPPLPIQAFLHKYVKTNFHFSGKSFKELKMKPHQTIKFPETTLINIIPDIPKNVVQTYLEISVCHQYSFKRLIYCETFYTDMDDVQQENSVELIGLPMAAHHLTMHDFNKLYQLLKPDGFLIVYDFHKSQEAFWLHSLQDALGHHTIRRDMDFHTISEWETIFKECGFTPMFNKQPSEHELFIVFKK.

The Helicase ATP-binding domain maps to 43–229; that stretch reads IPTSLADRVL…FGIGKENIIL (187 aa). 56–63 is an ATP binding site; that stretch reads SRTGSGKS. Residues 167 to 170 carry the DEAH box motif; it reads DEAH. The Helicase C-terminal domain occupies 253-459; the sequence is ACETALTIHK…TIKKNKEGVF (207 aa). A helical transmembrane segment spans residues 521–541; the sequence is GYFWQAAISDIATILAVVSVV.

Belongs to the DEAD box helicase family. DEAH subfamily.

The protein localises to the host membrane. It localises to the virion. It catalyses the reaction ATP + H2O = ADP + phosphate + H(+). The protein is Putative RNA Helicase B962L of Ornithodoros (relapsing fever ticks).